The chain runs to 207 residues: Granulocyte colony-stimulating factor (207 aa).

The first 30 residues, 1–30 (MAGPATQSPMKLMALQLLLWHSALWTVQEA), serve as a signal peptide directing secretion. 2 disulfides stabilise this stretch: C69-C75 and C97-C107. T166 is a glycosylation site (O-linked (GalNAc...) threonine).

The protein belongs to the IL-6 superfamily. Monomer. O-glycan consists of Gal-GalNAc disaccharide which can be modified with up to two sialic acid residues (done in recombinantly expressed G-CSF from CHO cells).

Its subcellular location is the secreted. Granulocyte/macrophage colony-stimulating factors are cytokines that act in hematopoiesis by controlling the production, differentiation, and function of 2 related white cell populations of the blood, the granulocytes and the monocytes-macrophages. This CSF induces granulocytes. This chain is Granulocyte colony-stimulating factor (CSF3), found in Homo sapiens (Human).